The primary structure comprises 685 residues: Tripartite terminase subunit 1 (685 aa).

Residues 173-201 (CWRCVGELMVLPNHGNPSTAEGTHVSCNH) form a C3H1-type zinc finger. 2 disordered regions span residues 231–254 (EEKA…EAEG) and 394–423 (LGRG…SGAL). A compositionally biased stretch (basic and acidic residues) spans 395–407 (GRGEEEASRESPE). 619–626 (YNKTWGRS) is a binding site for ATP.

Belongs to the herpesviridae TRM1 protein family. As to quaternary structure, associates with TRM2 and TRM3 to form the tripartite terminase complex. Interacts with portal protein.

The protein localises to the host nucleus. Its function is as follows. Component of the molecular motor that translocates viral genomic DNA in empty capsid during DNA packaging. Forms a tripartite terminase complex together with TRM2 and TRM3 in the host cytoplasm. Once the complex reaches the host nucleus, it interacts with the capsid portal vertex. This portal forms a ring in which genomic DNA is translocated into the capsid. TRM1 carries an endonuclease activity that plays an important role for the cleavage of concatemeric viral DNA into unit length genomes. The sequence is that of Tripartite terminase subunit 1 from Epstein-Barr virus (strain B95-8) (HHV-4).